Here is a 162-residue protein sequence, read N- to C-terminus: Shikimate kinase (162 aa).

11 to 16 (GSGKSS) contacts ATP. Ser15 lines the Mg(2+) pocket. Residues Asp33, Arg57, and Gly80 each coordinate substrate. Position 116 (Arg116) interacts with ATP. Arg132 provides a ligand contact to substrate.

The protein belongs to the shikimate kinase family. Monomer. It depends on Mg(2+) as a cofactor.

It localises to the cytoplasm. It catalyses the reaction shikimate + ATP = 3-phosphoshikimate + ADP + H(+). It participates in metabolic intermediate biosynthesis; chorismate biosynthesis; chorismate from D-erythrose 4-phosphate and phosphoenolpyruvate: step 5/7. Functionally, catalyzes the specific phosphorylation of the 3-hydroxyl group of shikimic acid using ATP as a cosubstrate. In Helicobacter pylori (strain HPAG1), this protein is Shikimate kinase.